Consider the following 618-residue polypeptide: Glycine--tRNA ligase 2 (618 aa).

Glutamate 187 is a binding site for glycine. Residues 219–221 (RNE) and 230–231 (RV) contribute to the ATP site. Glycine is bound at residue glutamate 238. ATP is bound at residue 347–348 (EC). 466–468 (EPS) provides a ligand contact to glycine. Arginine 473 contributes to the ATP binding site.

This sequence belongs to the class-II aminoacyl-tRNA synthetase family. As to quaternary structure, homodimer.

It localises to the cytoplasm. The enzyme catalyses tRNA(Gly) + glycine + ATP = glycyl-tRNA(Gly) + AMP + diphosphate. It catalyses the reaction 2 ATP + H(+) = P(1),P(4)-bis(5'-adenosyl) tetraphosphate + diphosphate. In terms of biological role, catalyzes the ATP-dependent ligation of glycine to the 3'-end of its cognate tRNA, via the formation of an aminoacyl-adenylate intermediate (Gly-AMP). Also produces diadenosine tetraphosphate (Ap4A), a universal pleiotropic signaling molecule needed for cell regulation pathways, by direct condensation of 2 ATPs. Thereby, may play a special role in Ap4A homeostasis. The polypeptide is Glycine--tRNA ligase 2 (GRS2) (Saccharomyces cerevisiae (strain ATCC 204508 / S288c) (Baker's yeast)).